The following is a 431-amino-acid chain: Adenylosuccinate lyase (431 aa).

N(6)-(1,2-dicarboxyethyl)-AMP contacts are provided by residues 4–5 (RY), 67–69 (NHD), and 93–94 (TS). His141 serves as the catalytic Proton donor/acceptor. Gln212 contacts N(6)-(1,2-dicarboxyethyl)-AMP. The active-site Proton donor/acceptor is Ser262. Residues Ser263, 268–270 (KKN), and 307–311 (SVERY) each bind N(6)-(1,2-dicarboxyethyl)-AMP.

Belongs to the lyase 1 family. Adenylosuccinate lyase subfamily. As to quaternary structure, homotetramer. Residues from neighboring subunits contribute catalytic and substrate-binding residues to each active site.

The catalysed reaction is N(6)-(1,2-dicarboxyethyl)-AMP = fumarate + AMP. It carries out the reaction (2S)-2-[5-amino-1-(5-phospho-beta-D-ribosyl)imidazole-4-carboxamido]succinate = 5-amino-1-(5-phospho-beta-D-ribosyl)imidazole-4-carboxamide + fumarate. The protein operates within purine metabolism; AMP biosynthesis via de novo pathway; AMP from IMP: step 2/2. It functions in the pathway purine metabolism; IMP biosynthesis via de novo pathway; 5-amino-1-(5-phospho-D-ribosyl)imidazole-4-carboxamide from 5-amino-1-(5-phospho-D-ribosyl)imidazole-4-carboxylate: step 2/2. Its function is as follows. Catalyzes two reactions in de novo purine nucleotide biosynthesis. Catalyzes the breakdown of 5-aminoimidazole- (N-succinylocarboxamide) ribotide (SAICAR or 2-[5-amino-1-(5-phospho-beta-D-ribosyl)imidazole-4-carboxamido]succinate) to 5-aminoimidazole-4-carboxamide ribotide (AICAR or 5-amino-1-(5-phospho-beta-D-ribosyl)imidazole-4-carboxamide) and fumarate, and of adenylosuccinate (ADS or N(6)-(1,2-dicarboxyethyl)-AMP) to adenosine monophosphate (AMP) and fumarate. The protein is Adenylosuccinate lyase (purB) of Thermotoga maritima (strain ATCC 43589 / DSM 3109 / JCM 10099 / NBRC 100826 / MSB8).